Consider the following 676-residue polypeptide: RNA helicase NPH-II (676 aa).

The Helicase ATP-binding domain maps to 172 to 347 (FSAWISHRPV…VFLPNPAFIH (176 aa)). 185 to 192 (GGTGVGKT) is a binding site for ATP. The DEXH box signature appears at 296 to 299 (DEVH). One can recognise a Helicase C-terminal domain in the interval 366-542 (NPSSRMAYIE…KFNLTLPEDL (177 aa)).

This sequence belongs to the DEAD box helicase family. DEAH subfamily. Monomer.

Its subcellular location is the virion. The enzyme catalyses ATP + H2O = ADP + phosphate + H(+). NTP-dependent helicase that catalyzes unidirectional unwinding of 3'tailed duplex RNAs and plays an important role during transcription of early mRNAs, presumably by preventing R-loop formation behind the elongating RNA polymerase. Might also play a role in the export of newly synthesized mRNA chains out of the core into the cytoplasm. Required for replication and propagation of viral particles. The polypeptide is RNA helicase NPH-II (OPG084) (Homo sapiens (Human)).